A 163-amino-acid chain; its full sequence is Xanthine-guanine phosphoribosyltransferase (163 aa).

5-phospho-alpha-D-ribose 1-diphosphate-binding positions include 43–44 (RG) and 95–103 (DDLVDTGGT). D96 serves as a coordination point for Mg(2+). Positions 99 and 142 each coordinate guanine. Residues D99 and I142 each coordinate xanthine. GMP is bound by residues 99–103 (DTGGT) and 141–142 (WI).

It belongs to the purine/pyrimidine phosphoribosyltransferase family. XGPT subfamily. As to quaternary structure, homotetramer. Requires Mg(2+) as cofactor.

It is found in the cell inner membrane. It catalyses the reaction GMP + diphosphate = guanine + 5-phospho-alpha-D-ribose 1-diphosphate. The enzyme catalyses XMP + diphosphate = xanthine + 5-phospho-alpha-D-ribose 1-diphosphate. The catalysed reaction is IMP + diphosphate = hypoxanthine + 5-phospho-alpha-D-ribose 1-diphosphate. Its pathway is purine metabolism; GMP biosynthesis via salvage pathway; GMP from guanine: step 1/1. It participates in purine metabolism; XMP biosynthesis via salvage pathway; XMP from xanthine: step 1/1. Purine salvage pathway enzyme that catalyzes the transfer of the ribosyl-5-phosphate group from 5-phospho-alpha-D-ribose 1-diphosphate (PRPP) to the N9 position of the 6-oxopurines guanine and xanthine to form the corresponding ribonucleotides GMP (guanosine 5'-monophosphate) and XMP (xanthosine 5'-monophosphate), with the release of PPi. To a lesser extent, also acts on hypoxanthine. The chain is Xanthine-guanine phosphoribosyltransferase from Nitratidesulfovibrio vulgaris (strain DP4) (Desulfovibrio vulgaris).